The following is a 259-amino-acid chain: Hemin import ATP-binding protein HmuV (259 aa).

The region spanning 6–242 is the ABC transporter domain; it reads IQGRDLCVTY…ERIEQVYGYQ (237 aa). Position 38-45 (38-45) interacts with ATP; that stretch reads GPNGAGKS.

Belongs to the ABC transporter superfamily. Heme (hemin) importer (TC 3.A.1.14.5) family. The complex is composed of two ATP-binding proteins (HmuV), two transmembrane proteins (HmuU) and a solute-binding protein (HmuT).

Its subcellular location is the cell inner membrane. Part of the ABC transporter complex HmuTUV involved in hemin import. Responsible for energy coupling to the transport system. The sequence is that of Hemin import ATP-binding protein HmuV from Vibrio cholerae serotype O1 (strain ATCC 39315 / El Tor Inaba N16961).